Reading from the N-terminus, the 445-residue chain is Phosphoglucosamine mutase (445 aa).

Ser-100 acts as the Phosphoserine intermediate in catalysis. Residues Ser-100, Asp-240, Asp-242, and Asp-244 each contribute to the Mg(2+) site. Ser-100 bears the Phosphoserine mark.

This sequence belongs to the phosphohexose mutase family. Mg(2+) is required as a cofactor. Post-translationally, activated by phosphorylation.

The catalysed reaction is alpha-D-glucosamine 1-phosphate = D-glucosamine 6-phosphate. Its function is as follows. Catalyzes the conversion of glucosamine-6-phosphate to glucosamine-1-phosphate. The chain is Phosphoglucosamine mutase from Pelotomaculum thermopropionicum (strain DSM 13744 / JCM 10971 / SI).